The primary structure comprises 148 residues: uncharacterized protein (148 aa).

This is an uncharacterized protein from Bacillus subtilis (Bacteriophage SP01).